The chain runs to 298 residues: Ethanolamine ammonia-lyase small subunit (298 aa).

Residues 17 to 37 (MGQDVPQPVAPSKQEGAKPQC) form a disordered region. The adenosylcob(III)alamin site is built by Val210, Glu231, and Cys261.

The protein belongs to the EutC family. In terms of assembly, the basic unit is a heterodimer which dimerizes to form tetramers. The heterotetramers trimerize; 6 large subunits form a core ring with 6 small subunits projecting outwards. Requires adenosylcob(III)alamin as cofactor.

It localises to the bacterial microcompartment. It carries out the reaction ethanolamine = acetaldehyde + NH4(+). It functions in the pathway amine and polyamine degradation; ethanolamine degradation. In terms of biological role, catalyzes the deamination of various vicinal amino-alcohols to oxo compounds. Allows this organism to utilize ethanolamine as the sole source of nitrogen and carbon in the presence of external vitamin B12. This Salmonella paratyphi A (strain ATCC 9150 / SARB42) protein is Ethanolamine ammonia-lyase small subunit.